The following is a 478-amino-acid chain: Calcium/calmodulin-dependent protein kinase type II subunit alpha (478 aa).

Residue Y13 is modified to Phosphotyrosine. Residues 13–271 (YQLFEELGKG…AAEALKHPWI (259 aa)) enclose the Protein kinase domain. Residues 19-27 (LGKGAFSVV) and K42 contribute to the ATP site. D135 serves as the catalytic Proton acceptor. A Phosphoserine modification is found at S257. A Phosphothreonine; by autocatalysis modification is found at T286. The tract at residues 290 to 300 (LKKFNARRKLK) is calmodulin-binding. The interval 310-320 (TRNFSGGKSGG) is interaction with BAALC. Residues 314–341 (SGGKSGGNKKSDGVKESSESTNTTIEDE) form a disordered region. Positions 322–331 (KKSDGVKESS) are enriched in basic and acidic residues. Phosphoserine is present on residues S330, S331, and S333. A phosphothreonine mark is found at T336 and T337. S404 carries the post-translational modification Phosphoserine.

It belongs to the protein kinase superfamily. CAMK Ser/Thr protein kinase family. CaMK subfamily. In terms of assembly, there are 4 genes encoding calcium/calmodulin-dependent protein kinase type II chains: CAMK2A, CAMK2B, CAMK2G and CAMK2D. The corresponding proteins assemble into homo- or heteromultimeric holoenzymes composed of 12 subunits with two hexameric rings stacked one on top of the other. Interacts with BAALC. Interacts with MPDZ. Interacts with SYN1. Interacts with CAMK2N2. Interacts with SYNGAP1. Interacts with SYNPO2. Interacts with SHANK3. Interacts with GRIN2B. Interacts with CACNB2. Interacts with LRRC7. Interacts with GRM5. Interacts with DAGLA (via C-terminal); this interaction is enhanced by autophosphorylation of CAMK2A at Thr-286. Interacts with CAMK2N1; this interaction requires CAMK2A activation by Ca(2+). The cofactor is Mg(2+). Autophosphorylation of Thr-286 following activation by Ca(2+)/calmodulin. Phosphorylation of Thr-286 locks the kinase into an activated state. In terms of processing, palmitoylated. Probably palmitoylated by ZDHHC3 and ZDHHC7.

It is found in the synapse. The protein resides in the postsynaptic density. It localises to the cell projection. Its subcellular location is the dendritic spine. The protein localises to the dendrite. The catalysed reaction is L-seryl-[protein] + ATP = O-phospho-L-seryl-[protein] + ADP + H(+). The enzyme catalyses L-threonyl-[protein] + ATP = O-phospho-L-threonyl-[protein] + ADP + H(+). Its activity is regulated as follows. Activated by Ca(2+)/calmodulin. Binding of calmodulin results in conformational change that relieves intrasteric autoinhibition and allows autophosphorylation of Thr-286 which turns the kinase in a constitutively active form and confers to the kinase a Ca(2+)-independent activity. Functionally, calcium/calmodulin-dependent protein kinase that functions autonomously after Ca(2+)/calmodulin-binding and autophosphorylation, and is involved in various processes, such as synaptic plasticity, neurotransmitter release and long-term potentiation. Member of the NMDAR signaling complex in excitatory synapses, it regulates NMDAR-dependent potentiation of the AMPAR and therefore excitatory synaptic transmission. Regulates dendritic spine development. Also regulates the migration of developing neurons. Phosphorylates the transcription factor FOXO3 to activate its transcriptional activity. Phosphorylates the transcription factor ETS1 in response to calcium signaling, thereby decreasing ETS1 affinity for DNA. In response to interferon-gamma (IFN-gamma) stimulation, catalyzes phosphorylation of STAT1, stimulating the JAK-STAT signaling pathway. In response to interferon-beta (IFN-beta) stimulation, stimulates the JAK-STAT signaling pathway. Acts as a negative regulator of 2-arachidonoylglycerol (2-AG)-mediated synaptic signaling via modulation of DAGLA activity. The polypeptide is Calcium/calmodulin-dependent protein kinase type II subunit alpha (CAMK2A) (Pongo abelii (Sumatran orangutan)).